The sequence spans 842 residues: Alanine--tRNA ligase (842 aa).

His-549, His-553, Cys-650, and His-654 together coordinate Zn(2+).

This sequence belongs to the class-II aminoacyl-tRNA synthetase family. Requires Zn(2+) as cofactor.

The protein localises to the cytoplasm. It catalyses the reaction tRNA(Ala) + L-alanine + ATP = L-alanyl-tRNA(Ala) + AMP + diphosphate. Functionally, catalyzes the attachment of alanine to tRNA(Ala) in a two-step reaction: alanine is first activated by ATP to form Ala-AMP and then transferred to the acceptor end of tRNA(Ala). Also edits incorrectly charged Ser-tRNA(Ala) and Gly-tRNA(Ala) via its editing domain. This chain is Alanine--tRNA ligase, found in Campylobacter jejuni subsp. doylei (strain ATCC BAA-1458 / RM4099 / 269.97).